The chain runs to 207 residues: NAD(P)H dehydrogenase (quinone) (207 aa).

One can recognise a Flavodoxin-like domain in the interval 3–194; sequence VQIIFYSMYG…EMAKFQGRHV (192 aa). FMN-binding positions include 9–14 and 82–84; these read SMYGHI and TRF. Tyrosine 11 is a binding site for NAD(+). Tryptophan 102 serves as a coordination point for substrate. FMN-binding positions include 117 to 123 and histidine 138; that span reads STATQHG.

It belongs to the WrbA family. It depends on FMN as a cofactor.

It catalyses the reaction a quinone + NADH + H(+) = a quinol + NAD(+). The enzyme catalyses a quinone + NADPH + H(+) = a quinol + NADP(+). In Aromatoleum aromaticum (strain DSM 19018 / LMG 30748 / EbN1) (Azoarcus sp. (strain EbN1)), this protein is NAD(P)H dehydrogenase (quinone).